The chain runs to 376 residues: MEENLRIIISGGGTGGHIFPAVSIANAIKEQHPEAEILFVGAEGRMEMQRVPAAGYPIKGLPVAGFDRKNLLKNVSVLFKLVKSQLLARKIIKDFKPHAAVGVGGYASGPTLKMAGMMGIPTLIQEQNSYAGVTNKLLAKKACKICVAYDGMERFFEKDKIILTGNPVRQGLRNHHISREEAIRSFGLDPSKKTILIVGGSLGARTINNCVMEGLDKIKASGAQFIWQTGKIYIGEARAAVAQAGELPMLHVTDFISDMAAAYSAADLIISRAGAGSISEFCLLQKPVILVPSPNVAEDHQTKNALALVNKNAALYIKDAAAKEALLDKAVETVKQPETLKSLSTNIAKLAFTDSANVIAREVFKLADKYRKENGR.

UDP-N-acetyl-alpha-D-glucosamine is bound by residues 14–16, N128, R169, S201, I256, and Q301; that span reads TGG.

Belongs to the glycosyltransferase 28 family. MurG subfamily.

It is found in the cell inner membrane. The enzyme catalyses di-trans,octa-cis-undecaprenyl diphospho-N-acetyl-alpha-D-muramoyl-L-alanyl-D-glutamyl-meso-2,6-diaminopimeloyl-D-alanyl-D-alanine + UDP-N-acetyl-alpha-D-glucosamine = di-trans,octa-cis-undecaprenyl diphospho-[N-acetyl-alpha-D-glucosaminyl-(1-&gt;4)]-N-acetyl-alpha-D-muramoyl-L-alanyl-D-glutamyl-meso-2,6-diaminopimeloyl-D-alanyl-D-alanine + UDP + H(+). It functions in the pathway cell wall biogenesis; peptidoglycan biosynthesis. Functionally, cell wall formation. Catalyzes the transfer of a GlcNAc subunit on undecaprenyl-pyrophosphoryl-MurNAc-pentapeptide (lipid intermediate I) to form undecaprenyl-pyrophosphoryl-MurNAc-(pentapeptide)GlcNAc (lipid intermediate II). The chain is UDP-N-acetylglucosamine--N-acetylmuramyl-(pentapeptide) pyrophosphoryl-undecaprenol N-acetylglucosamine transferase from Phocaeicola vulgatus (strain ATCC 8482 / DSM 1447 / JCM 5826 / CCUG 4940 / NBRC 14291 / NCTC 11154) (Bacteroides vulgatus).